We begin with the raw amino-acid sequence, 379 residues long: Polycomb group protein FIE2 (379 aa).

WD repeat units lie at residues 85-128 (DKDE…LAKS), 131-171 (GHGD…CILI), 177-217 (GHRN…LYVD), 243-280 (VHSN…QSPG), 292-333 (VPEC…PVLI), and 340-378 (QCKS…PSSR).

It belongs to the WD repeat ESC family. Widely expressed. Expressed in the embryo sac before pollination. After pollination, its expression persists, predominantly in the embryo and at lower levels in the endosperm.

It localises to the nucleus. Functionally, polycomb group (PcG) protein. PcG proteins act by forming multiprotein complexes, which are required to maintain the transcriptionally repressive state of homeotic genes throughout development. PcG proteins are not required to initiate repression, but to maintain it during later stages of development. They probably act via the methylation of histones, rendering chromatin heritably changed in its expressibility. The polypeptide is Polycomb group protein FIE2 (FIE2) (Zea mays (Maize)).